The sequence spans 317 residues: Transaldolase (317 aa).

K132 functions as the Schiff-base intermediate with substrate in the catalytic mechanism.

Belongs to the transaldolase family. Type 1 subfamily. Homodimer.

It is found in the cytoplasm. It carries out the reaction D-sedoheptulose 7-phosphate + D-glyceraldehyde 3-phosphate = D-erythrose 4-phosphate + beta-D-fructose 6-phosphate. It participates in carbohydrate degradation; pentose phosphate pathway; D-glyceraldehyde 3-phosphate and beta-D-fructose 6-phosphate from D-ribose 5-phosphate and D-xylulose 5-phosphate (non-oxidative stage): step 2/3. In terms of biological role, transaldolase is important for the balance of metabolites in the pentose-phosphate pathway. The chain is Transaldolase from Shewanella denitrificans (strain OS217 / ATCC BAA-1090 / DSM 15013).